The primary structure comprises 342 residues: NAD kinase (342 aa).

The Proton acceptor role is filled by D66. NAD(+) is bound by residues 66-67, R71, 141-142, K152, D171, 182-187, and A206; these read DG, ND, and TAYAFS.

It belongs to the NAD kinase family. A divalent metal cation is required as a cofactor.

The protein resides in the cytoplasm. It carries out the reaction NAD(+) + ATP = ADP + NADP(+) + H(+). Involved in the regulation of the intracellular balance of NAD and NADP, and is a key enzyme in the biosynthesis of NADP. Catalyzes specifically the phosphorylation on 2'-hydroxyl of the adenosine moiety of NAD to yield NADP. The sequence is that of NAD kinase from Bifidobacterium longum (strain NCC 2705).